A 205-amino-acid chain; its full sequence is Disintegrin-like leberagin-C (205 aa).

The Disintegrin domain occupies proline 4–asparagine 90. Cystine bridges form between cysteine 7–cysteine 26, cysteine 18–cysteine 36, cysteine 62–cysteine 82, cysteine 69–cysteine 94, cysteine 101–cysteine 106, cysteine 113–cysteine 128, cysteine 151–cysteine 158, cysteine 163–cysteine 171, and cysteine 193–cysteine 198. The short motif at glutamate 68–aspartate 70 is the D/ECD-tripeptide element. The N-linked (GlcNAc...) asparagine glycan is linked to asparagine 120.

Belongs to the venom metalloproteinase (M12B) family. P-III subfamily. P-IIIb sub-subfamily. Monomer. Expressed by the venom gland.

The protein localises to the secreted. Its function is as follows. Inhibits platelet aggregation induced by thrombin and arachidonic acid with IC(50) of 40 and 50 nM respectively (in rabbit platetelet-rich plasma). It also inhibits the adhesion of melanoma tumor cells on fibrinogen and fibronectin, by interfering with the function of alpha-V/beta-3 (ITGAV/ITGB3) and, to a lesser extent, with alpha-V/beta-6 (ITGAV/ITGB6) and alpha-5/beta-1 (ITGA5/ITGB1) integrins. This Macrovipera lebetina transmediterranea (Blunt-nosed viper) protein is Disintegrin-like leberagin-C.